A 290-amino-acid polypeptide reads, in one-letter code: Probable aquaporin PIP2-7 (290 aa).

A run of 2 helical transmembrane segments spans residues 45 to 65 (ALIA…ATVI) and 79 to 99 (GVGY…LVYC). The short motif at 109–111 (NPA) is the NPA 1 element. 3 helical membrane-spanning segments follow: residues 128–148 (VLYV…VKGI), 168–188 (SAAG…YTVF), and 202–222 (IPVL…LATI). Positions 230–232 (NPA) match the NPA 2 motif. The helical transmembrane segment at 252–272 (IFWVGPVIGAFLAAAYHKLVL) threads the bilayer.

This sequence belongs to the MIP/aquaporin (TC 1.A.8) family. PIP (TC 1.A.8.11) subfamily. Expressed in roots.

The protein localises to the cell membrane. Its function is as follows. Aquaporins facilitate the transport of water and small neutral solutes across cell membranes. This chain is Probable aquaporin PIP2-7 (PIP2-7), found in Oryza sativa subsp. japonica (Rice).